Here is a 340-residue protein sequence, read N- to C-terminus: Fructose-1,6-bisphosphatase class 1 (340 aa).

Mg(2+) is bound by residues E107, D126, L128, and D129. A substrate-binding site is contributed by N215. E287 provides a ligand contact to Mg(2+).

This sequence belongs to the FBPase class 1 family. As to quaternary structure, homotetramer. Mg(2+) is required as a cofactor.

It localises to the cytoplasm. The enzyme catalyses beta-D-fructose 1,6-bisphosphate + H2O = beta-D-fructose 6-phosphate + phosphate. It functions in the pathway carbohydrate biosynthesis; gluconeogenesis. The protein is Fructose-1,6-bisphosphatase class 1 of Brucella ovis (strain ATCC 25840 / 63/290 / NCTC 10512).